The primary structure comprises 891 residues: MDDDQQFCLRWNNHQSTLISVFDTLLENETLVDCTLAAEGKFLKAHKVVLSACSPYFATLLQEQYDKHPIFILKDVKYQELRAMMDYMYRGEVNISQDQLAALLKAAESLQIKGLSDNRTGGGVAPKPESSGHHRGGKLSGAYTLEQTKRARLATGGAMDTSGDVSGSREGSSSPSRRRRKVRRRSMENDAHDNSNSSVLQAAASNQSILQQTGAGLAVSALVTTQLSSGPAAGTSSQASSTQQQQPLTSTNVTKKTESAKLTSSTAAPASGASASAAVQQAHLHQQQAQTTSDAINTENVQAQSQGGAQGVQGDDEDIDEGSAVGGPNSATGPNPASASASAVHAGVVVKQLASVVDKSSSNHKHKIKDNSVSSVGSEMVIEPKAEYDDDAHDENVEDLTLDEEDMTMEELDQTAGTSQGGEGSSQTYATWQHDRSQDELGLMAQDAQQRDPQDLSRKENTAPDVASTAEIQRSFQRSILNGKQRDEQKIQLPGSRRKRLSVTEVSDMLFEFYKTKSAKVPKAEQPHRQVSPTSGEILDPSTISAIAVYGTASETASKNLNADEVMRVQNATATRVVGAAAGAAASFHPRPKYTLKTAASSTEHTTAIPTSVLVANSAAALTPKPQAAVIAEALMRNGLHNFQQQLRAQEILRQQTPHRRIKEENDVEIAGGDITPTKILENLLRKQQERDLRHSECENEPGYSTEDDEEGRYHAFDDIHLMEQSGGKFGNNSGMGMFNANAHGGSASSILDAHQAFRNLEFTLSDYGGSSSNGSTTSPNGIGLDGEPVYECRHCGKKYRWKSTLRRHENVECGGKEPSHQCPYCPYKSKQRGNLGVHVRKHHTDLPQLPSKRRSKYSMNRENGMSGSMSDDSQGKLIIDFNGKGELETK.

One can recognise a BTB domain in the interval 32–97 (VDCTLAAEGK…MYRGEVNISQ (66 aa)). 2 disordered regions span residues 115 to 200 (LSDN…SSVL) and 228 to 340 (SSGP…ASAS). Position 140 is a phosphoserine (S140). At T161 the chain carries Phosphothreonine. Phosphoserine occurs at positions 162 and 168. 4 stretches are compositionally biased toward low complexity: residues 162–175 (SGDV…SSSP), 228–251 (SSGP…LTST), 263–293 (TSST…QTTS), and 329–340 (NSATGPNPASAS). Phosphoserine is present on residues S372, S375, and S378. The disordered stretch occupies residues 446–467 (QDAQQRDPQDLSRKENTAPDVA). A compositionally biased stretch (basic and acidic residues) spans 449–462 (QQRDPQDLSRKENT). Residues S696 and S705 each carry the phosphoserine modification. T706 is modified (phosphothreonine). Phosphoserine occurs at positions 749 and 750. The segment at 791–813 (YECRHCGKKYRWKSTLRRHENVE) adopts a C2H2-type 1; degenerate zinc-finger fold. The C2H2-type 2 zinc finger occupies 821–843 (HQCPYCPYKSKQRGNLGVHVRKH). Residues 840 to 891 (VRKHHTDLPQLPSKRRSKYSMNRENGMSGSMSDDSQGKLIIDFNGKGELETK) form a disordered region. S874 bears the Phosphoserine mark.

In terms of tissue distribution, expressed in both mesoderm and ectoderm with expression highest in the mesectoderm by stage 11. Becomes enriched in a cluster of brain cells, in abdominal histoblasts, and in the embryonic imaginal disks during later stages.

The protein resides in the nucleus. Its function is as follows. Putative transcription factor required for axon growth and guidance in the central and peripheral nervous systems. Repels CNS axons away from the midline by promoting the expression of the midline repellent sli and its receptor robo. This is Longitudinals lacking protein, isoform G from Drosophila melanogaster (Fruit fly).